The chain runs to 601 residues: Glutathione-regulated potassium-efflux system protein KefB (601 aa).

The next 13 helical transmembrane spans lie at 4 to 24 (SDLL…VPLA), 29 to 49 (IGAV…GLGF), 55 to 75 (EILH…GLEL), 87 to 107 (IFGV…GLLM), 115 to 135 (AAVI…LQLM), 152 to 172 (VLLF…LLAG), 177 to 197 (HFDW…LIGG), 207 to 227 (FIAD…LVLG), 230 to 250 (LFMD…GVLL), 262 to 282 (AIDP…GMSL), 284 to 304 (LGVL…LVAV), 324 to 344 (MQFA…FSTA), and 356 to 376 (SLLL…MKLV). Positions 400 to 519 (KPQVIVVGFG…AGVTQFSRET (120 aa)) constitute an RCK N-terminal domain.

The protein belongs to the monovalent cation:proton antiporter 2 (CPA2) transporter (TC 2.A.37) family. KefB subfamily. In terms of assembly, interacts with the regulatory subunit KefG.

The protein resides in the cell inner membrane. Functionally, pore-forming subunit of a potassium efflux system that confers protection against electrophiles. Catalyzes K(+)/H(+) antiport. This is Glutathione-regulated potassium-efflux system protein KefB from Citrobacter koseri (strain ATCC BAA-895 / CDC 4225-83 / SGSC4696).